An 838-amino-acid chain; its full sequence is Periplasmic nitrate reductase (838 aa).

The segment at residues 1-29 is a signal peptide (tat-type signal); sequence MKVSRRAFIKQTAAAATASVAGVTLPAGA. The 57-residue stretch at 41-97 folds into the 4Fe-4S Mo/W bis-MGD-type domain; it reads LKWSKAPCRFCGTGCGVEVAVKDNRVVATQGDPKAEVNRGLNCVKGYFLSKIMYGKD. 4 residues coordinate [4Fe-4S] cluster: cysteine 48, cysteine 51, cysteine 55, and cysteine 83. Mo-bis(molybdopterin guanine dinucleotide)-binding positions include lysine 85, glutamine 152, asparagine 177, cysteine 181, 214–221, 245–249, methionine 382, glutamine 386, asparagine 492, 518–519, lysine 541, aspartate 568, and 728–737; these read WGSNMAEM, STFTH, SD, and TGRVLEHWHS. Tryptophan 804 serves as a coordination point for substrate. The Mo-bis(molybdopterin guanine dinucleotide) site is built by asparagine 812 and lysine 829.

This sequence belongs to the prokaryotic molybdopterin-containing oxidoreductase family. NasA/NapA/NarB subfamily. As to quaternary structure, component of the periplasmic nitrate reductase NapAB complex composed of NapA and NapB. [4Fe-4S] cluster is required as a cofactor. The cofactor is Mo-bis(molybdopterin guanine dinucleotide). Predicted to be exported by the Tat system. The position of the signal peptide cleavage has not been experimentally proven.

Its subcellular location is the periplasm. The enzyme catalyses 2 Fe(II)-[cytochrome] + nitrate + 2 H(+) = 2 Fe(III)-[cytochrome] + nitrite + H2O. In terms of biological role, catalytic subunit of the periplasmic nitrate reductase complex NapAB. Receives electrons from NapB and catalyzes the reduction of nitrate to nitrite. In Ralstonia pickettii (strain 12J), this protein is Periplasmic nitrate reductase.